A 1768-amino-acid chain; its full sequence is Maestro heat-like repeat-containing protein family member 1 homolog (1768 aa).

HEAT repeat units lie at residues 4–47 (TSQV…HQPN), 164–203 (VHNP…AICS), 816–856 (QRLQ…AVHP), 1166–1204 (QSQM…ARGA), 1483–1521 (EQLL…CSST), and 1731–1768 (TISR…HDFH).

This sequence belongs to the MROH1 family. As to quaternary structure, homooligomer; homooligomerizes at lysosome scission sites.

The protein localises to the lysosome membrane. Lysosome fission factor. Recruited to lysosomes by rab-7 at scission sites and homooligomerizes to mediate the constriction and scission of lysosomal tubules. May sever membranes by inserting amphipathic helices into one bilayer leaflet. Lysosome fission is required to maintain their steady-state number, shape, size, composition and function, and to accomplish regeneration. The sequence is that of Maestro heat-like repeat-containing protein family member 1 homolog from Caenorhabditis elegans.